We begin with the raw amino-acid sequence, 353 residues long: GTPase Obg (353 aa).

One can recognise an Obg domain in the interval 1–159 (MKFLDEAKVY…RWIWLRLKLI (159 aa)). The OBG-type G domain maps to 160–327 (ADAGLVGLPN…ALRALAAVIG (168 aa)). GTP contacts are provided by residues 166-173 (GLPNAGKS), 191-195 (FTTLH), 212-215 (DIPG), 279-282 (NKID), and 308-310 (SGI). Ser-173 and Thr-193 together coordinate Mg(2+). Positions 332 to 353 (SDKAKGAADNAANAEPWAPQDA) are disordered.

Belongs to the TRAFAC class OBG-HflX-like GTPase superfamily. OBG GTPase family. As to quaternary structure, monomer. Mg(2+) serves as cofactor.

The protein resides in the cytoplasm. An essential GTPase which binds GTP, GDP and possibly (p)ppGpp with moderate affinity, with high nucleotide exchange rates and a fairly low GTP hydrolysis rate. Plays a role in control of the cell cycle, stress response, ribosome biogenesis and in those bacteria that undergo differentiation, in morphogenesis control. The polypeptide is GTPase Obg (Rhodopseudomonas palustris (strain HaA2)).